A 1234-amino-acid polypeptide reads, in one-letter code: DNA-directed RNA polymerase I subunit RPA2 (1234 aa).

A C4-type zinc finger spans residues 1119–1150 (CRQCGSFLSTQPTVSPFIGKRKAVSTVRCRNC).

It belongs to the RNA polymerase beta chain family. In terms of assembly, component of the RNA polymerase I (Pol I) complex consisting of 14 subunits.

The protein resides in the nucleus. Its subcellular location is the nucleolus. The catalysed reaction is RNA(n) + a ribonucleoside 5'-triphosphate = RNA(n+1) + diphosphate. Its function is as follows. DNA-dependent RNA polymerase catalyzes the transcription of DNA into RNA using the four ribonucleoside triphosphates as substrates. Second largest core component of RNA polymerase I which synthesizes ribosomal RNA precursors. Proposed to contribute to the polymerase catalytic activity and forms the polymerase active center together with the largest subunit. Pol I is composed of mobile elements and RPA2 is part of the core element with the central large cleft and probably a clamp element that moves to open and close the cleft. This chain is DNA-directed RNA polymerase I subunit RPA2 (acr-2), found in Neurospora crassa (strain ATCC 24698 / 74-OR23-1A / CBS 708.71 / DSM 1257 / FGSC 987).